We begin with the raw amino-acid sequence, 496 residues long: Glutamyl-tRNA(Gln) amidotransferase subunit A, mitochondrial (496 aa).

Residues K75 and S162 each act as charge relay system in the active site. The Acyl-ester intermediate role is filled by S186.

Belongs to the amidase family. GatA subfamily. In terms of assembly, subunit of the heterotrimeric GatCAB amidotransferase (AdT) complex, composed of A, B and C subunits.

The protein localises to the mitochondrion. It carries out the reaction L-glutamyl-tRNA(Gln) + L-glutamine + ATP + H2O = L-glutaminyl-tRNA(Gln) + L-glutamate + ADP + phosphate + H(+). In terms of biological role, allows the formation of correctly charged Gln-tRNA(Gln) through the transamidation of misacylated Glu-tRNA(Gln) in the mitochondria. The reaction takes place in the presence of glutamine and ATP through an activated gamma-phospho-Glu-tRNA(Gln). This Pediculus humanus subsp. corporis (Body louse) protein is Glutamyl-tRNA(Gln) amidotransferase subunit A, mitochondrial.